Consider the following 334-residue polypeptide: GTP 3',8-cyclase (334 aa).

The 227-residue stretch at 13–239 (RFQRKFYYLR…KARADNDGPA (227 aa)) folds into the Radical SAM core domain. Arg22 contributes to the GTP binding site. [4Fe-4S] cluster-binding residues include Cys29 and Cys33. An S-adenosyl-L-methionine-binding site is contributed by Tyr35. Cys36 contacts [4Fe-4S] cluster. GTP is bound at residue Arg73. Gly77 is an S-adenosyl-L-methionine binding site. Thr104 lines the GTP pocket. Ser128 contributes to the S-adenosyl-L-methionine binding site. Residue Lys165 coordinates GTP. Residue Met199 participates in S-adenosyl-L-methionine binding. The [4Fe-4S] cluster site is built by Cys262 and Cys265. 267–269 (RLR) contributes to the GTP binding site. Cys279 contacts [4Fe-4S] cluster.

It belongs to the radical SAM superfamily. MoaA family. As to quaternary structure, monomer and homodimer. [4Fe-4S] cluster is required as a cofactor.

It carries out the reaction GTP + AH2 + S-adenosyl-L-methionine = (8S)-3',8-cyclo-7,8-dihydroguanosine 5'-triphosphate + 5'-deoxyadenosine + L-methionine + A + H(+). Its pathway is cofactor biosynthesis; molybdopterin biosynthesis. Its function is as follows. Catalyzes the cyclization of GTP to (8S)-3',8-cyclo-7,8-dihydroguanosine 5'-triphosphate. This chain is GTP 3',8-cyclase, found in Vibrio cholerae serotype O1 (strain M66-2).